Reading from the N-terminus, the 78-residue chain is Protein FAM240B (78 aa).

This sequence belongs to the FAM240 family.

This chain is Protein FAM240B, found in Homo sapiens (Human).